We begin with the raw amino-acid sequence, 769 residues long: 5-methyltetrahydropteroyltriglutamate--homocysteine methyltransferase (769 aa).

5-methyltetrahydropteroyltri-L-glutamate-binding positions include 17–20 (RELK) and Lys-118. L-homocysteine-binding positions include 441–443 (IGS) and Glu-494. Residues 441-443 (IGS) and Glu-494 each bind L-methionine. 5-methyltetrahydropteroyltri-L-glutamate is bound by residues 525 to 526 (RC) and Trp-571. Residue Asp-609 coordinates L-homocysteine. Asp-609 contacts L-methionine. Glu-615 serves as a coordination point for 5-methyltetrahydropteroyltri-L-glutamate. 3 residues coordinate Zn(2+): His-651, Cys-653, and Glu-675. His-705 serves as the catalytic Proton donor. A Zn(2+)-binding site is contributed by Cys-737.

Belongs to the vitamin-B12 independent methionine synthase family. Requires Zn(2+) as cofactor.

It catalyses the reaction 5-methyltetrahydropteroyltri-L-glutamate + L-homocysteine = tetrahydropteroyltri-L-glutamate + L-methionine. Its pathway is amino-acid biosynthesis; L-methionine biosynthesis via de novo pathway; L-methionine from L-homocysteine (MetE route): step 1/1. In terms of biological role, catalyzes the transfer of a methyl group from 5-methyltetrahydrofolate to homocysteine resulting in methionine formation. The polypeptide is 5-methyltetrahydropteroyltriglutamate--homocysteine methyltransferase (Blochmanniella floridana).